The following is a 160-amino-acid chain: MTFSLIVATTLNNVIGKDNQMPWHLPADLAWFRQNTTGKPVIMGRKTFESIGRPLPKRTNIVLSRQLFEHEGVIWKDSFESAVNFVRDFDEIMLIGGGELFKQYLPKADKLYLTQIQTELDGDTFFPQLNWEEWEIEFDEYRKADEQNRYDCRFLILTRK.

In terms of domain architecture, DHFR spans 2–159; that stretch reads TFSLIVATTL…YDCRFLILTR (158 aa). I6 lines the substrate pocket. NADP(+)-binding positions include A8 and 14 to 20; that span reads VIGKDNQ. D28 contacts substrate. 46-47 is an NADP(+) binding site; the sequence is KT. Residues R53 and R58 each coordinate substrate. NADP(+) contacts are provided by residues 64 to 65 and 96 to 103; these read SR and GGGELFKQ. T114 contacts substrate.

It belongs to the dihydrofolate reductase family.

The enzyme catalyses (6S)-5,6,7,8-tetrahydrofolate + NADP(+) = 7,8-dihydrofolate + NADPH + H(+). It participates in cofactor biosynthesis; tetrahydrofolate biosynthesis; 5,6,7,8-tetrahydrofolate from 7,8-dihydrofolate: step 1/1. Key enzyme in folate metabolism. Catalyzes an essential reaction for de novo glycine and purine synthesis, and for DNA precursor synthesis. The chain is Dihydrofolate reductase (folA) from Haemophilus influenzae (strain ATCC 51907 / DSM 11121 / KW20 / Rd).